The primary structure comprises 315 residues: Annexin Gh1 (315 aa).

Annexin repeat units follow at residues 10–81 (PSVS…LWAL), 82–153 (DPAE…PLVS), 165–236 (TLAK…STVK), and 240–311 (YPEK…VLAG). The Ca(2+) site is built by phenylalanine 23, glycine 25, glycine 27, and glutamate 67. The Ca(2+) site is built by isoleucine 253, arginine 255, glycine 257, valine 295, aspartate 297, threonine 298, and glutamate 303.

This sequence belongs to the annexin family. As to quaternary structure, monomer. Trimer. Oligomerization is calcium-independent. Disassembly of the oligomers seems to be required for calcium-binding.

It is found in the membrane. Binds to phospholipid vesicles in a calcium-dependent manner in vitro. Prefers phosphatidyl-serine containing membranes. May have a role in the membrane cytoskeleton scaffolding or exocytotic processes. May be involved in oxidative stress response. This chain is Annexin Gh1, found in Gossypium hirsutum (Upland cotton).